The primary structure comprises 228 residues: MLLPIPDVLSPAQLSQLRAQLDVADWADGRITAGHQSAQAKDNAQLPEDSAVAREAGALVLEALARSSTFFSAVLPRRIYPPLFNRYSGGQSFGYHVDNAIRYDRSRGGADPVRTDVSATLFLSDPDSYDGGELVIEDTYGTQSVKLPAGHLVIYPGTSLHRVMPVTRGARVACFFWTQSMLRDAAQRRLLFELDVSIRRLTQDTPGHPSLIQLTGVYHNLLRQWADV.

In terms of domain architecture, Fe2OG dioxygenase spans 78–180; the sequence is RIYPPLFNRY…RVACFFWTQS (103 aa). 3 residues coordinate Fe cation: His-96, Asp-98, and His-161. Arg-171 lines the 2-oxoglutarate pocket.

The cofactor is Fe(2+). L-ascorbate is required as a cofactor.

In Xanthomonas euvesicatoria pv. vesicatoria (strain 85-10) (Xanthomonas campestris pv. vesicatoria), this protein is PKHD-type hydroxylase XCV3086.